Here is a 647-residue protein sequence, read N- to C-terminus: Putative ankyrin repeat protein L764 (647 aa).

ANK repeat units lie at residues 123–154, 202–231, 233–256, 258–284, 289–319, 348–377, 401–431, 529–558, and 588–617; these read LKDREIYLNSNCDDINLIKFIVTRNDYFQINL, LTQEHIKLAVQNRKIPVLEHLINLGIEYDL, EIINDIKDFDILKYMLEIGNSLNE, NVNIIIFNIHTTQLIEYLMNLGYTINS, SMFSHMLIVSENTDIVEFLKSINAKDSDLTV, DCNLFLKYAIISQDIPNIEYSINKGADLKK, NDVNNFILKIIENDCIETLKYLVDNNYNIDL, FILKEFPEECSSEKMDTIKFLLDFNADNNE, and NGQNIVEYLISDGDHEIFRYLYYNGFDVKN.

This Acanthamoeba polyphaga (Amoeba) protein is Putative ankyrin repeat protein L764.